Here is a 446-residue protein sequence, read N- to C-terminus: 5-methylthioadenosine/S-adenosylhomocysteine deaminase (446 aa).

Positions 72 and 74 each coordinate Zn(2+). Positions 101 and 194 each coordinate substrate. Zn(2+) is bound at residue His-221. Residues Glu-224 and Asp-309 each contribute to the substrate site. Asp-309 is a Zn(2+) binding site.

The protein belongs to the metallo-dependent hydrolases superfamily. MTA/SAH deaminase family. Requires Zn(2+) as cofactor.

The enzyme catalyses S-adenosyl-L-homocysteine + H2O + H(+) = S-inosyl-L-homocysteine + NH4(+). It catalyses the reaction S-methyl-5'-thioadenosine + H2O + H(+) = S-methyl-5'-thioinosine + NH4(+). In terms of biological role, catalyzes the deamination of 5-methylthioadenosine and S-adenosyl-L-homocysteine into 5-methylthioinosine and S-inosyl-L-homocysteine, respectively. Is also able to deaminate adenosine. This chain is 5-methylthioadenosine/S-adenosylhomocysteine deaminase, found in Saccharophagus degradans (strain 2-40 / ATCC 43961 / DSM 17024).